Reading from the N-terminus, the 423-residue chain is MQKAGAGGRRASDCGLAPHRPRCITKFAQYVGSFPVDDLDTQESVWLVQQQLWALKDCPRRRAVILKFSLQGLKIYSGEGEVLLMAHALRRILYSTWCPADCQFAFMARNPRSPASKLFCHLFVGSQPGEVQILHLLLCRSFQLAYLLQHPEERAQPEPCPGPTGEVPLKPLSSSGGLVREPFGRDQLSQNVHALVSFRRLPAEGLVGSGKELPESEGRARHARLGNPYCSPTLVRKKAIRSKVIRSGAYRGCTYETQLQLSAREAFPAAWEAWPRGPGGHSCLVESEGSLTENIWAFAGISRPCALALLRRDVLGAFLLWPELGASGQWCLSVRTQCGVVPHQVFRNHLGRYCLEHLPAEFPSLEALVENHAVTERSLFCPLDMGRLNPTYEEQDCGPPGRPPRTLRPLSHAKSEAELQGLG.

A PID domain is found at Ala-28–Tyr-146. The SH2 domain occupies Trp-296–Tyr-392. A disordered region spans residues Tyr-392–Gly-423.

In terms of assembly, interacts with BCR.

It localises to the postsynaptic density. In terms of biological role, may be involved in synaptic plasticity regulation through the control of Rac-GTP levels. The sequence is that of SH2 domain-containing protein 5 from Homo sapiens (Human).